We begin with the raw amino-acid sequence, 424 residues long: Catabolic NAD-specific glutamate dehydrogenase RocG (424 aa).

The substrate site is built by Lys-80 and Lys-104. Lys-116 serves as the catalytic Proton donor. Thr-200 and Asn-231 together coordinate NAD(+). Ser-358 contacts substrate.

This sequence belongs to the Glu/Leu/Phe/Val dehydrogenases family. In terms of assembly, homohexamer. Interacts with transcriptional regulator GltC.

It carries out the reaction L-glutamate + NAD(+) + H2O = 2-oxoglutarate + NH4(+) + NADH + H(+). Functionally, devoted to catabolic function of glutamate (and other amino acids of the glutamate family) utilization as sole nitrogen source. It is not involved in anabolic function of glutamate biosynthesis since B.subtilis possesses only one route of glutamate biosynthesis from ammonia, catalyzed by glutamate synthase. Wild-type cells are unable to utilize glutamate or glutamine as a sole carbon source; thus RocG does not function physiologically to synthesize glutamate, but it is involved in the utilization of arginine, and proline as carbon or nitrogen source. The catabolic RocG is essential for controlling gltAB expression via an inhibitory interactions with the transcriptional regulator GltC in response to the availability of sugars. This chain is Catabolic NAD-specific glutamate dehydrogenase RocG, found in Bacillus subtilis (strain 168).